The chain runs to 480 residues: Cobyric acid synthase (480 aa).

Residues 249–436 (KLKVVVPVLT…LHGFLDSEAA (188 aa)) enclose the GATase cobBQ-type domain. The active-site Nucleophile is the Cys-330. The active site involves His-428.

It belongs to the CobB/CobQ family. CobQ subfamily.

Its pathway is cofactor biosynthesis; adenosylcobalamin biosynthesis. Functionally, catalyzes amidations at positions B, D, E, and G on adenosylcobyrinic A,C-diamide. NH(2) groups are provided by glutamine, and one molecule of ATP is hydrogenolyzed for each amidation. This is Cobyric acid synthase from Vibrio vulnificus (strain YJ016).